A 329-amino-acid chain; its full sequence is MSFFSFGQSAEIDIVLNDAETRKKAEHKTEDGKKDKYFLFYDGETVSGKVNVTLKTPGKRLEHQGFKIEFIGQIELYYDRGNHHEFVSLVKDLARPGEMAQSQTFDFEFTHVEKPYESYTGQNVKLRYFLRATVSRRLNDICKEMDIVVHTLSTYPELNSSIKMEVGIEDCLHIEFEYNKSKYHLKDVIVGKIYFLLVRIKIKHMEIDIIKRETTGTGPNVYHENDTIAKYEIMDGAPVRGESIPIRLFLAGYEMTPTMRDINKKFSVRYYLNLVLIDEEERRYFKQQEITLWREGDVARKSMSHQAAIASQRFEGSEKTLPQAKEDSN.

Belongs to the VPS26 family.

It localises to the cytoplasm. The protein localises to the membrane. Probable component of the retromer complex, a complex required to retrieve lysosomal enzyme receptors (IGF2R and M6PR) from endosomes to the trans-Golgi network. The sequence is that of Vacuolar protein sorting-associated protein 26B-like (vps26bl) from Danio rerio (Zebrafish).